Reading from the N-terminus, the 445-residue chain is uncharacterized protein (445 aa).

The segment at 139–160 (TESQKDLEYERKANKTKEENQQ) is disordered.

This is an uncharacterized protein from Mycoplasma pneumoniae (strain ATCC 29342 / M129 / Subtype 1) (Mycoplasmoides pneumoniae).